The chain runs to 403 residues: MKNKVFASIGDAVKDIKVGRMVIVVDDPGRENEGDLICAAEKASPEVINFMTKYARGLICVPMKHERLKELEIENMVEKPTEKKGCSFTVSVDYKIGTTTGISAYDRSVTVRKLIDKTAKHEDFARPGHIFPLRCKEGGVLARTGHTEAAVDLVRLAGFYPAGIICEIMNNDGTMARMSDLIKFAKKHDLHIITIGELVNYRRRTEKFISEIVNVDLPTRYGDFKLVLFEDLITKDSHIAVVKGVVKNRQNVLVRVHSSCETGDIFHSLRCDCGDQLETALKAVGEAEQGVVLYIHQEGRGIGLANKLKAYRLQEKGMDTVEANKALGFDPDLRDYGIGAQMLSELGIKSINLMTNNPGKINGLESYGLKITKRVPLEISPSKSNEKYLKTKKEKMGHMLKKV.

The segment at 1 to 204 (MKNKVFASIG…IGELVNYRRR (204 aa)) is DHBP synthase. D-ribulose 5-phosphate contacts are provided by residues 30-31 (RE), aspartate 35, 143-147 (RTGHT), and glutamate 167. Glutamate 31 contacts Mg(2+). Mg(2+) is bound at residue histidine 146. The interval 205 to 403 (TEKFISEIVN…EKMGHMLKKV (199 aa)) is GTP cyclohydrolase II. 255-259 (RVHSS) lines the GTP pocket. The Zn(2+) site is built by cysteine 260, cysteine 271, and cysteine 273. GTP is bound by residues glutamine 276, 298 to 300 (EGR), and threonine 320. Catalysis depends on aspartate 332, which acts as the Proton acceptor; for GTP cyclohydrolase activity. Catalysis depends on arginine 334, which acts as the Nucleophile; for GTP cyclohydrolase activity. GTP is bound by residues threonine 355 and lysine 360.

The protein in the N-terminal section; belongs to the DHBP synthase family. This sequence in the C-terminal section; belongs to the GTP cyclohydrolase II family. Mg(2+) is required as a cofactor. The cofactor is Mn(2+). Requires Zn(2+) as cofactor.

It catalyses the reaction D-ribulose 5-phosphate = (2S)-2-hydroxy-3-oxobutyl phosphate + formate + H(+). It carries out the reaction GTP + 4 H2O = 2,5-diamino-6-hydroxy-4-(5-phosphoribosylamino)-pyrimidine + formate + 2 phosphate + 3 H(+). Its pathway is cofactor biosynthesis; riboflavin biosynthesis; 2-hydroxy-3-oxobutyl phosphate from D-ribulose 5-phosphate: step 1/1. It participates in cofactor biosynthesis; riboflavin biosynthesis; 5-amino-6-(D-ribitylamino)uracil from GTP: step 1/4. Functionally, catalyzes the conversion of D-ribulose 5-phosphate to formate and 3,4-dihydroxy-2-butanone 4-phosphate. Its function is as follows. Catalyzes the conversion of GTP to 2,5-diamino-6-ribosylamino-4(3H)-pyrimidinone 5'-phosphate (DARP), formate and pyrophosphate. In Endomicrobium trichonymphae, this protein is Riboflavin biosynthesis protein RibBA.